The sequence spans 359 residues: Peptide chain release factor 1 (359 aa).

At Q236 the chain carries N5-methylglutamine.

Belongs to the prokaryotic/mitochondrial release factor family. Methylated by PrmC. Methylation increases the termination efficiency of RF1.

The protein localises to the cytoplasm. Peptide chain release factor 1 directs the termination of translation in response to the peptide chain termination codons UAG and UAA. The sequence is that of Peptide chain release factor 1 from Streptococcus pyogenes serotype M12 (strain MGAS2096).